The following is a 1076-amino-acid chain: Bifunctional glutamine synthetase adenylyltransferase/adenylyl-removing enzyme (1076 aa).

The adenylyl removase stretch occupies residues 1-521 (MESSIFKPSS…LHLDIYYRPM (521 aa)). The tract at residues 524 to 1076 (VNAQMENDQI…LERNRRRAQR (553 aa)) is adenylyl transferase. Residues 1042–1056 (TATASAATQQPQTAP) are compositionally biased toward low complexity. Positions 1042-1076 (TATASAATQQPQTAPRPRMHVIAPRLERNRRRAQR) are disordered.

This sequence belongs to the GlnE family. It depends on Mg(2+) as a cofactor.

The enzyme catalyses [glutamine synthetase]-O(4)-(5'-adenylyl)-L-tyrosine + phosphate = [glutamine synthetase]-L-tyrosine + ADP. It catalyses the reaction [glutamine synthetase]-L-tyrosine + ATP = [glutamine synthetase]-O(4)-(5'-adenylyl)-L-tyrosine + diphosphate. In terms of biological role, involved in the regulation of glutamine synthetase GlnA, a key enzyme in the process to assimilate ammonia. When cellular nitrogen levels are high, the C-terminal adenylyl transferase (AT) inactivates GlnA by covalent transfer of an adenylyl group from ATP to specific tyrosine residue of GlnA, thus reducing its activity. Conversely, when nitrogen levels are low, the N-terminal adenylyl removase (AR) activates GlnA by removing the adenylyl group by phosphorolysis, increasing its activity. The regulatory region of GlnE binds the signal transduction protein PII (GlnB) which indicates the nitrogen status of the cell. The protein is Bifunctional glutamine synthetase adenylyltransferase/adenylyl-removing enzyme of Bifidobacterium longum (strain NCC 2705).